A 131-amino-acid polypeptide reads, in one-letter code: UPF0102 protein YraN (131 aa).

A compositionally biased stretch (polar residues) spans 1-19; it reads MATVPTRSGSPRQLTTKQT. Positions 1-20 are disordered; that stretch reads MATVPTRSGSPRQLTTKQTG.

It belongs to the UPF0102 family.

This is UPF0102 protein YraN from Escherichia fergusonii (strain ATCC 35469 / DSM 13698 / CCUG 18766 / IAM 14443 / JCM 21226 / LMG 7866 / NBRC 102419 / NCTC 12128 / CDC 0568-73).